We begin with the raw amino-acid sequence, 241 residues long: Uridylate kinase (241 aa).

ATP is bound by residues 10–13, Gly53, and Arg57; that span reads KLSG. UMP is bound by residues Asp72 and 133–140; that span reads AGSPYFST. ATP contacts are provided by Asn161, Tyr167, and Asp170.

The protein belongs to the UMP kinase family. In terms of assembly, homohexamer.

Its subcellular location is the cytoplasm. The catalysed reaction is UMP + ATP = UDP + ADP. It functions in the pathway pyrimidine metabolism; CTP biosynthesis via de novo pathway; UDP from UMP (UMPK route): step 1/1. With respect to regulation, inhibited by UTP. In terms of biological role, catalyzes the reversible phosphorylation of UMP to UDP. This is Uridylate kinase from Onion yellows phytoplasma (strain OY-M).